The sequence spans 445 residues: Trigger factor (445 aa).

The PPIase FKBP-type domain occupies 171 to 256 (NDIVIIDFKG…VHVVNEVETP (86 aa)).

This sequence belongs to the FKBP-type PPIase family. Tig subfamily.

It is found in the cytoplasm. It carries out the reaction [protein]-peptidylproline (omega=180) = [protein]-peptidylproline (omega=0). Its function is as follows. Involved in protein export. Acts as a chaperone by maintaining the newly synthesized protein in an open conformation. Functions as a peptidyl-prolyl cis-trans isomerase. The polypeptide is Trigger factor (Malacoplasma penetrans (strain HF-2) (Mycoplasma penetrans)).